A 967-amino-acid polypeptide reads, in one-letter code: Sulfite dehydrogenase subunit A (967 aa).

The 4Fe-4S Mo/W bis-MGD-type domain occupies 15–71 (VEVKETTCYMCACRCGIRVHLRDGEVRYIDGNPNHPLNKGVICAKGSSGIMKQYSPG). [4Fe-4S] cluster is bound by residues Cys-22, Cys-25, Cys-29, and Cys-57.

It belongs to the prokaryotic molybdopterin-containing oxidoreductase family. As to quaternary structure, forms a heterotrimeric membrane-bound complex composed of a catalytic heterodimer (SoeAB) and a membrane anchor protein (SoeC). Requires [4Fe-4S] cluster as cofactor. Mo-bis(molybdopterin guanine dinucleotide) is required as a cofactor.

Its subcellular location is the cell inner membrane. The catalysed reaction is a quinone + sulfite + H2O = a quinol + sulfate. The enzyme catalyses a menaquinone + sulfite + H2O = a menaquinol + sulfate. Functionally, part of the SoeABC complex that catalyzes the oxidation of sulfite to sulfate. The polypeptide is Sulfite dehydrogenase subunit A (Allochromatium vinosum (strain ATCC 17899 / DSM 180 / NBRC 103801 / NCIMB 10441 / D) (Chromatium vinosum)).